The sequence spans 67 residues: Large ribosomal subunit protein bL31 (67 aa).

The protein belongs to the bacterial ribosomal protein bL31 family. Type A subfamily. Part of the 50S ribosomal subunit.

Its function is as follows. Binds the 23S rRNA. In Helicobacter acinonychis (strain Sheeba), this protein is Large ribosomal subunit protein bL31.